The primary structure comprises 371 residues: Tetraacyldisaccharide 4'-kinase (371 aa).

Position 48 to 55 (Ser48 to Thr55) interacts with ATP.

It belongs to the LpxK family.

It carries out the reaction a lipid A disaccharide + ATP = a lipid IVA + ADP + H(+). It participates in glycolipid biosynthesis; lipid IV(A) biosynthesis; lipid IV(A) from (3R)-3-hydroxytetradecanoyl-[acyl-carrier-protein] and UDP-N-acetyl-alpha-D-glucosamine: step 6/6. In terms of biological role, transfers the gamma-phosphate of ATP to the 4'-position of a tetraacyldisaccharide 1-phosphate intermediate (termed DS-1-P) to form tetraacyldisaccharide 1,4'-bis-phosphate (lipid IVA). This is Tetraacyldisaccharide 4'-kinase from Chlorobium chlorochromatii (strain CaD3).